Reading from the N-terminus, the 484-residue chain is Protein nucleotidyltransferase YdiU (484 aa).

ATP contacts are provided by Gly-81, Gly-83, Arg-84, Lys-103, Asp-115, Gly-116, Arg-166, and Arg-173. The active-site Proton acceptor is the Asp-244. Mg(2+) is bound by residues Asn-245 and Asp-254. Position 254 (Asp-254) interacts with ATP.

The protein belongs to the SELO family. Mg(2+) is required as a cofactor. Requires Mn(2+) as cofactor.

The enzyme catalyses L-seryl-[protein] + ATP = 3-O-(5'-adenylyl)-L-seryl-[protein] + diphosphate. It catalyses the reaction L-threonyl-[protein] + ATP = 3-O-(5'-adenylyl)-L-threonyl-[protein] + diphosphate. The catalysed reaction is L-tyrosyl-[protein] + ATP = O-(5'-adenylyl)-L-tyrosyl-[protein] + diphosphate. It carries out the reaction L-histidyl-[protein] + UTP = N(tele)-(5'-uridylyl)-L-histidyl-[protein] + diphosphate. The enzyme catalyses L-seryl-[protein] + UTP = O-(5'-uridylyl)-L-seryl-[protein] + diphosphate. It catalyses the reaction L-tyrosyl-[protein] + UTP = O-(5'-uridylyl)-L-tyrosyl-[protein] + diphosphate. Functionally, nucleotidyltransferase involved in the post-translational modification of proteins. It can catalyze the addition of adenosine monophosphate (AMP) or uridine monophosphate (UMP) to a protein, resulting in modifications known as AMPylation and UMPylation. This chain is Protein nucleotidyltransferase YdiU, found in Shewanella sp. (strain MR-7).